Here is a 387-residue protein sequence, read N- to C-terminus: Exodeoxyribonuclease 7 large subunit (387 aa).

This sequence belongs to the XseA family. In terms of assembly, heterooligomer composed of large and small subunits.

It is found in the cytoplasm. The catalysed reaction is Exonucleolytic cleavage in either 5'- to 3'- or 3'- to 5'-direction to yield nucleoside 5'-phosphates.. Its function is as follows. Bidirectionally degrades single-stranded DNA into large acid-insoluble oligonucleotides, which are then degraded further into small acid-soluble oligonucleotides. The protein is Exodeoxyribonuclease 7 large subunit of Campylobacter jejuni subsp. jejuni serotype O:23/36 (strain 81-176).